Consider the following 457-residue polypeptide: MALWGGRFTQAADQRFKQFNDSLRFDYRLAEQDIVGSVAWSKALVTVGVLTAEEQAQLEEALNVLLEDVRARPQQILESDAEDIHSWVEGKLIDKVGQLGKKLHTGRSRNDQVATDLKLWCKDTVSELLTANRQLQSALVETAQNNQDAVMPGYTHLQRAQPVTFAHWCLAYVEMLARDESRLQDALKRLDVSPLGCGALAGTAYEIDREQLAGWLGFASATRNSLDSVSDRDHVLELLSAAAIGMVHLSRFAEDLIFFNTGEAGFVELSDRVTSGSSLMPQKKNPDALELIRGKCGRVQGALTGMMMTLKGLPLAYNKDMQEDKEGLFDALDTWLDCLHMAALVLDGIQVKRPRCQEAAQQGYANATELADYLVAKGVPFREAHHIVGEAVVEAIRQGKALEDLPLSELQKFSQVIGEDVYPILSLQSCLDKRAAKGGVSPQQVAQAIAFAQARLG.

This sequence belongs to the lyase 1 family. Argininosuccinate lyase subfamily.

The protein resides in the cytoplasm. The enzyme catalyses 2-(N(omega)-L-arginino)succinate = fumarate + L-arginine. Its pathway is amino-acid biosynthesis; L-arginine biosynthesis; L-arginine from L-ornithine and carbamoyl phosphate: step 3/3. The chain is Argininosuccinate lyase from Escherichia coli O1:K1 / APEC.